The sequence spans 198 residues: Putative manganese efflux pump MntP (198 aa).

Helical transmembrane passes span 3–23 (SIEL…VAIC), 37–57 (VLTG…GYLL), 65–85 (ITSI…INMI), 105–127 (SLTV…FAFL), 131–153 (IIPA…VKIG), and 171–191 (ILIG…SFVF).

This sequence belongs to the MntP (TC 9.B.29) family.

Its subcellular location is the cell membrane. Probably functions as a manganese efflux pump. This is Putative manganese efflux pump MntP from Acetivibrio thermocellus (strain ATCC 27405 / DSM 1237 / JCM 9322 / NBRC 103400 / NCIMB 10682 / NRRL B-4536 / VPI 7372) (Clostridium thermocellum).